The primary structure comprises 946 residues: MKLLSKVFVTALGLTSIVNAAPTSSSSAEEAQKTVPVELSIGVKQLPNIHNDSAVDANAVAKGYSLVNVSLTARGLTGILKLKEATNIYGYDFEYLNLSVEYQSDTRLNVHIEPTDLTDVFVLPEELVVKPKLEGDAKTFNFENSDLVFEYDEEDFGFEVLRSSTREVLFSTKGNPLVFSNQFIQFNTTLPKGHSITGLGESIHGSLNEPGVVKTLYANDIADPIDGNIYGVHPVYYDQRYNTNTTHAVYWRTSAIQEVVVGETSLTWRALSGVIDLYFFSGPDPKDVIQQYVSEIGLPAMQPYWALGYHQCRWGYDTVESLETVVENFKKFDIPLETIWSDIDYMDGYKDFTNDPYRFPTDKFRKFLDDLHNNSQHYVPIFDAAIYVPNPNNATDNDYEPFHLGNESDVFLKNPDGSLYIGAVWPGYTVFPDFLANNTQEYWNKMFKDWYERIPFDGIWTDMNEVSSFCVGSCGTGRYFDNPVHPPFEVGYSGSDYPLGFDKSNASEWKSISEAAAATKTTTTTSSSTSTSIDGKNTLAPGKGNINYPPYAINNNQGDHDLATHAISPNATHADGTVEYDIHNIYGLIQERAIYEALLEIHPNKRPFIIGRSSFAGSGKYMGHWGGDNYADYYMMYFSIPQALSMGLSGIPFFGVDACGFNGNTDMELCSRWMQLASFFPFYRNHNVLGAIPQEPYVWEGVMNATKTSINVRYSLLPYYYTLLHESHVTGIPIMRAFNWQFPYSKELAGVDTQFFVGDALLVTPVLEPGVNHTKGVFPGENAVYYDFYTHKKQKFTAGKNETLAAPLGHIPLHIKGGNIIPTQEPGYTTTESRKNPFGLLVALDAEGTASGKLYLDDGESVDVEEALYVDFVASKNKLVASVFGEYEVRQPLANVTILGVDSEPKKVLFNNETVSHNYENGAVYLTDLEKFTKEGAFAEEFSIQW.

Residues 1 to 20 (MKLLSKVFVTALGLTSIVNA) form the signal peptide. N-linked (GlcNAc...) asparagine glycans are attached at residues N51, N68, N97, N187, N244, N373, N393, N406, and N437. Residues D462 and E465 contribute to the active site. An N-linked (GlcNAc...) asparagine glycan is attached at N505. A compositionally biased stretch (low complexity) spans 517–532 (AATKTTTTTSSSTSTS). A disordered region spans residues 517-541 (AATKTTTTTSSSTSTSIDGKNTLAP). N570 carries an N-linked (GlcNAc...) asparagine glycan. Catalysis depends on D628, which acts as the Proton donor. Residues N704, N772, N801, N895, and N912 are each glycosylated (N-linked (GlcNAc...) asparagine).

Belongs to the glycosyl hydrolase 31 family. The N-terminus is blocked.

The protein resides in the secreted. Its subcellular location is the cell wall. The protein localises to the membrane. It catalyses the reaction Hydrolysis of terminal (1-&gt;4)-linked alpha-D-glucose residues successively from non-reducing ends of the chains with release of beta-D-glucose.. In Candida albicans (strain SC5314 / ATCC MYA-2876) (Yeast), this protein is Glucoamylase 1 (GAM1).